Here is a 501-residue protein sequence, read N- to C-terminus: Glycerol kinase (501 aa).

Thr-11 lines the ADP pocket. Residues Thr-11, Thr-12, and Ser-13 each contribute to the ATP site. Position 11 (Thr-11) interacts with sn-glycerol 3-phosphate. Arg-15 contributes to the ADP binding site. Positions 81, 82, 133, and 242 each coordinate sn-glycerol 3-phosphate. Glycerol contacts are provided by Arg-81, Glu-82, Tyr-133, Asp-242, and Gln-243. Thr-264 and Gly-307 together coordinate ADP. 4 residues coordinate ATP: Thr-264, Gly-307, Gln-311, and Gly-409. ADP contacts are provided by Gly-409 and Asn-413.

This sequence belongs to the FGGY kinase family.

The enzyme catalyses glycerol + ATP = sn-glycerol 3-phosphate + ADP + H(+). It participates in polyol metabolism; glycerol degradation via glycerol kinase pathway; sn-glycerol 3-phosphate from glycerol: step 1/1. Its activity is regulated as follows. Inhibited by fructose 1,6-bisphosphate (FBP). In terms of biological role, key enzyme in the regulation of glycerol uptake and metabolism. Catalyzes the phosphorylation of glycerol to yield sn-glycerol 3-phosphate. The sequence is that of Glycerol kinase from Borreliella afzelii (strain PKo) (Borrelia afzelii).